The chain runs to 284 residues: MGVESVRCPLHFTKMQGAGNDFVVLDLRDGTPPPDAALVAWLADRHFGIGCDQVIAIEPPRGVGVVAAYRIWNADGSAAQQCGNGARCVAAWLVRDGSLADEHFLIDSPVQAHSVRCIGKDEYAVEMGLPVFEPERIPLSGFPNACAEYVLSLQGEVLRCGAVSMGNPHAVVEVDLIDVAPVERIGPLLQQHVAFPESVNVGFVQVIDPGLVRLRVYERGAGETLACGSGACAAAVVLMQRGRVGRDVRVVLPGGTLRVQWPVSGGPVTLSGPARCVFDGVWYG.

Substrate-binding residues include N20, Q53, and N73. Catalysis depends on C82, which acts as the Proton donor. Substrate is bound by residues 83–84 (GN), N167, N200, and 218–219 (ER). Residue C227 is the Proton acceptor of the active site. Residue 228–229 (GS) coordinates substrate.

Belongs to the diaminopimelate epimerase family. Homodimer.

Its subcellular location is the cytoplasm. It catalyses the reaction (2S,6S)-2,6-diaminopimelate = meso-2,6-diaminopimelate. The protein operates within amino-acid biosynthesis; L-lysine biosynthesis via DAP pathway; DL-2,6-diaminopimelate from LL-2,6-diaminopimelate: step 1/1. Catalyzes the stereoinversion of LL-2,6-diaminopimelate (L,L-DAP) to meso-diaminopimelate (meso-DAP), a precursor of L-lysine and an essential component of the bacterial peptidoglycan. This chain is Diaminopimelate epimerase, found in Xylella fastidiosa (strain M12).